The chain runs to 40 residues: Photosystem II reaction center protein J (40 aa).

The helical transmembrane segment at 8-28 (IPLWIIGTVAGILVIGLIGIF) threads the bilayer.

The protein belongs to the PsbJ family. In terms of assembly, PSII is composed of 1 copy each of membrane proteins PsbA, PsbB, PsbC, PsbD, PsbE, PsbF, PsbH, PsbI, PsbJ, PsbK, PsbL, PsbM, PsbT, PsbX, PsbY, PsbZ, Psb30/Ycf12, at least 3 peripheral proteins of the oxygen-evolving complex and a large number of cofactors. It forms dimeric complexes.

The protein localises to the plastid. The protein resides in the chloroplast thylakoid membrane. In terms of biological role, one of the components of the core complex of photosystem II (PSII). PSII is a light-driven water:plastoquinone oxidoreductase that uses light energy to abstract electrons from H(2)O, generating O(2) and a proton gradient subsequently used for ATP formation. It consists of a core antenna complex that captures photons, and an electron transfer chain that converts photonic excitation into a charge separation. This Oenothera elata subsp. hookeri (Hooker's evening primrose) protein is Photosystem II reaction center protein J.